We begin with the raw amino-acid sequence, 251 residues long: PF03932 family protein CutC (251 aa).

It belongs to the CutC family.

The protein resides in the cytoplasm. In Bacteroides fragilis (strain YCH46), this protein is PF03932 family protein CutC.